We begin with the raw amino-acid sequence, 122 residues long: Large ribosomal subunit protein uL14 (122 aa).

This sequence belongs to the universal ribosomal protein uL14 family. In terms of assembly, part of the 50S ribosomal subunit. Forms a cluster with proteins L3 and L19. In the 70S ribosome, L14 and L19 interact and together make contacts with the 16S rRNA in bridges B5 and B8.

In terms of biological role, binds to 23S rRNA. Forms part of two intersubunit bridges in the 70S ribosome. The protein is Large ribosomal subunit protein uL14 of Desulforapulum autotrophicum (strain ATCC 43914 / DSM 3382 / VKM B-1955 / HRM2) (Desulfobacterium autotrophicum).